A 358-amino-acid polypeptide reads, in one-letter code: C-X-C chemokine receptor type 4-B (358 aa).

An important for chemokine binding and signaling region spans residues 1–25 (MDGFSGGIDINIFDGNSTENGSGDF). The Extracellular segment spans residues 1-44 (MDGFSGGIDINIFDGNSTENGSGDFEDFIEPCFMQENSDFNRIF). N16 and N20 each carry an N-linked (GlcNAc...) asparagine glycan. 2 cysteine pairs are disulfide-bonded: C32-C281 and C113-C190. The chain crosses the membrane as a helical span at residues 45-67 (LPTIYSFIFLLGIIGNGLVVVVM). At 68-81 (GYQKKSRTMTDKYR) the chain is on the cytoplasmic side. A helical transmembrane segment spans residues 82–103 (LHLSVADLLFVFTLPFWSVDAA). The segment at 98–101 (WSVD) is chemokine binding. The Extracellular portion of the chain corresponds to 104–114 (IGWYFKEFLCK). A helical membrane pass occupies residues 115–134 (AVHVIYTVNLYSSVLILAFI). The chemokine binding stretch occupies residues 117 to 121 (HVIYT). Topologically, residues 135–158 (SLDRYLAIVHATNSQGSRKMLADK) are cytoplasmic. Positions 139-151 (YLAIVHATNSQGS) are involved in dimerization; when bound to chemokine. The helical transmembrane segment at 159–178 (VVYAGVWLPALLLTVPDLVF) threads the bilayer. Residues 179 to 202 (ASVSNENGQFVCDRIYPIDNRETW) are Extracellular-facing. A chemokine binding, important for signaling region spans residues 190-194 (CDRIY). Residues 203–223 (TVGFRFLHITVGLILPGLIIL) form a helical membrane-spanning segment. Topologically, residues 224–248 (VCYCVIISKLSHSKGHQKRKALKTT) are cytoplasmic. The helical transmembrane segment at 249–268 (VILILAFFACWLPYYVCLTT) threads the bilayer. Residues 269–289 (DTFMMLGLVKADCIWENTLHK) lie on the Extracellular side of the membrane. Residues 290-309 (AISITEALAFFHCCLNPILY) form a helical membrane-spanning segment. Topologically, residues 310–358 (AFLGAKFKKSAQNAFTSVSRGSSLKILSKKRAGLSSVSTESESSSFHSS) are cytoplasmic. The interval 338-358 (KKRAGLSSVSTESESSSFHSS) is disordered. Positions 344 to 358 (SSVSTESESSSFHSS) are enriched in low complexity.

This sequence belongs to the G-protein coupled receptor 1 family. Monomer. Can form dimers. Sulfation is required for efficient binding of cxcl12/sdf-1alpha and promotes its dimerization. Post-translationally, O- and N-glycosylated.

It localises to the cell membrane. Its subcellular location is the cytoplasm. The protein resides in the nucleus. The protein localises to the early endosome. It is found in the late endosome. It localises to the lysosome. Functionally, receptor for the C-X-C chemokine cxcl12/sdf-1. Transduces a signal by increasing the intracellular level of calcium ions. Signaling with cxcl12/sdf-1 mediates the directional movement of mesodermal cells during gastrulation. May play a role in the migration of embryonic presumptive primordial germ cells (pPGCs). May also be involved in regulating migration of hematopoietic stem cells into the larval liver. The sequence is that of C-X-C chemokine receptor type 4-B (cxcr4-b) from Xenopus laevis (African clawed frog).